The chain runs to 507 residues: FSD1-like protein (507 aa).

A coiled-coil region spans residues Lys70–Glu109. The region spanning Leu105–Leu162 is the COS domain. The Fibronectin type-III domain occupies Val164–Leu268. In terms of domain architecture, B30.2/SPRY spans Asp291 to Ala484. Residues Pro292 to Phe345 form a disordered region. Residues Gln298–Gly309 show a composition bias toward basic and acidic residues. The segment covering Ser321 to Gly332 has biased composition (polar residues). Phosphoserine is present on residues Ser498 and Ser501.

The chain is FSD1-like protein (Fsd1l) from Mus musculus (Mouse).